Reading from the N-terminus, the 472-residue chain is Diaminopimelate decarboxylase (472 aa).

The segment at Met1–Val23 is disordered. N6-(pyridoxal phosphate)lysine is present on Lys97. Residues Gly283 and Glu325 to Arg328 contribute to the pyridoxal 5'-phosphate site. Arg328, Arg369, and Tyr373 together coordinate substrate. Cys400 (proton donor) is an active-site residue. Substrate contacts are provided by Glu401 and Tyr430. Residue Tyr430 coordinates pyridoxal 5'-phosphate.

The protein belongs to the Orn/Lys/Arg decarboxylase class-II family. LysA subfamily. Homodimer. Pyridoxal 5'-phosphate is required as a cofactor.

It carries out the reaction meso-2,6-diaminopimelate + H(+) = L-lysine + CO2. It participates in amino-acid biosynthesis; L-lysine biosynthesis via DAP pathway; L-lysine from DL-2,6-diaminopimelate: step 1/1. Functionally, specifically catalyzes the decarboxylation of meso-diaminopimelate (meso-DAP) to L-lysine. The protein is Diaminopimelate decarboxylase of Mycobacterium leprae (strain TN).